The chain runs to 499 residues: Glycerol kinase (499 aa).

Threonine 17 is a binding site for ADP. Residues threonine 17, threonine 18, and serine 19 each contribute to the ATP site. Position 17 (threonine 17) interacts with sn-glycerol 3-phosphate. An ADP-binding site is contributed by arginine 21. 4 residues coordinate sn-glycerol 3-phosphate: arginine 87, glutamate 88, tyrosine 139, and aspartate 243. Positions 87, 88, 139, 243, and 244 each coordinate glycerol. Positions 265 and 308 each coordinate ADP. Threonine 265, glycine 308, glutamine 312, and glycine 409 together coordinate ATP. The ADP site is built by glycine 409 and asparagine 413.

It belongs to the FGGY kinase family.

The enzyme catalyses glycerol + ATP = sn-glycerol 3-phosphate + ADP + H(+). It participates in polyol metabolism; glycerol degradation via glycerol kinase pathway; sn-glycerol 3-phosphate from glycerol: step 1/1. With respect to regulation, inhibited by fructose 1,6-bisphosphate (FBP). Its function is as follows. Key enzyme in the regulation of glycerol uptake and metabolism. Catalyzes the phosphorylation of glycerol to yield sn-glycerol 3-phosphate. In Pseudomonas putida (strain ATCC 700007 / DSM 6899 / JCM 31910 / BCRC 17059 / LMG 24140 / F1), this protein is Glycerol kinase.